The sequence spans 164 residues: Kunitz-type serine protease inhibitor BbKI (164 aa).

It belongs to the protease inhibitor I3 (leguminous Kunitz-type inhibitor) family. As to quaternary structure, monomer.

The protein localises to the secreted. Functionally, inhibits bovine trypsin, human plasma kallikrein and plasmin and weakly bovine chymotrypsin. This chain is Kunitz-type serine protease inhibitor BbKI, found in Bauhinia bauhinioides (Perlebia bauhinoides).